The chain runs to 728 residues: Probable ubiquitin-conjugating enzyme protein 17 (728 aa).

The segment covering 1-17 (MSSQASQRSSSTSAVAQ) has biased composition (low complexity). Disordered regions lie at residues 1–23 (MSSQ…RERR) and 123–155 (SSRS…GSTR). The 167-residue stretch at 402–568 (DRTKRIAKEL…IEHATLNYAI (167 aa)) folds into the UBC core domain. The Glycyl thioester intermediate role is filled by Cys-495. Disordered stretches follow at residues 649-678 (PFAK…EAAA) and 709-728 (RTQP…STSS). Over residues 658–678 (SERLKREQSEKEEKQKKEAAA) the composition is skewed to basic and acidic residues. Polar residues predominate over residues 710–728 (TQPTGDYSVPSVNEPSTSS).

The protein belongs to the ubiquitin-conjugating enzyme family.

This is Probable ubiquitin-conjugating enzyme protein 17 (ubc-17) from Caenorhabditis elegans.